The following is a 110-amino-acid chain: UPF0122 protein GWCH70_1086 (110 aa).

Belongs to the UPF0122 family.

In terms of biological role, might take part in the signal recognition particle (SRP) pathway. This is inferred from the conservation of its genetic proximity to ftsY/ffh. May be a regulatory protein. This is UPF0122 protein GWCH70_1086 from Geobacillus sp. (strain WCH70).